Here is a 353-residue protein sequence, read N- to C-terminus: UPF0283 membrane protein YcjF (353 aa).

3 helical membrane-spanning segments follow: residues 70-90 (MVMG…VQWT), 100-120 (VALG…GSVV), and 213-233 (ESTL…FIAW).

Belongs to the UPF0283 family.

It localises to the cell inner membrane. This is UPF0283 membrane protein YcjF from Escherichia fergusonii (strain ATCC 35469 / DSM 13698 / CCUG 18766 / IAM 14443 / JCM 21226 / LMG 7866 / NBRC 102419 / NCTC 12128 / CDC 0568-73).